Here is a 382-residue protein sequence, read N- to C-terminus: Cell division protein FtsZ (382 aa).

GTP-binding positions include 21–25 (GGGSN), 108–110 (GTG), Glu-139, Arg-143, and Asp-187. The segment at 322–382 (RAQQQSNFNR…FLRNRRRKSR (61 aa)) is disordered. Basic and acidic residues predominate over residues 340-352 (KSKEKEAEKKEPR).

The protein belongs to the FtsZ family. As to quaternary structure, homodimer. Polymerizes to form a dynamic ring structure in a strictly GTP-dependent manner. Interacts directly with several other division proteins.

The protein localises to the cytoplasm. Its function is as follows. Essential cell division protein that forms a contractile ring structure (Z ring) at the future cell division site. The regulation of the ring assembly controls the timing and the location of cell division. One of the functions of the FtsZ ring is to recruit other cell division proteins to the septum to produce a new cell wall between the dividing cells. Binds GTP and shows GTPase activity. The chain is Cell division protein FtsZ from Halalkalibacterium halodurans (strain ATCC BAA-125 / DSM 18197 / FERM 7344 / JCM 9153 / C-125) (Bacillus halodurans).